A 138-amino-acid chain; its full sequence is Protein FAM136A (138 aa).

N-acetylalanine is present on A2. Phosphothreonine is present on residues T124 and T126.

The protein belongs to the FAM136 family.

The chain is Protein FAM136A (FAM136A) from Bos taurus (Bovine).